The primary structure comprises 160 residues: Cytochrome b6-f complex subunit 4 (160 aa).

A run of 3 helical transmembrane segments spans residues 36–56, 95–115, and 128–148; these read LLYI…GLAV, LLGI…PFIE, and IAMS…IGAC.

The protein belongs to the cytochrome b family. PetD subfamily. The 4 large subunits of the cytochrome b6-f complex are cytochrome b6, subunit IV (17 kDa polypeptide, PetD), cytochrome f and the Rieske protein, while the 4 small subunits are PetG, PetL, PetM and PetN. The complex functions as a dimer.

Its subcellular location is the cellular thylakoid membrane. Functionally, component of the cytochrome b6-f complex, which mediates electron transfer between photosystem II (PSII) and photosystem I (PSI), cyclic electron flow around PSI, and state transitions. This chain is Cytochrome b6-f complex subunit 4, found in Prochlorococcus marinus (strain MIT 9301).